The following is a 245-amino-acid chain: Adenosine 5'-phosphosulfate reductase (245 aa).

4 residues coordinate [4Fe-4S] cluster: Cys-124, Cys-125, Cys-205, and Cys-208. Catalysis depends on Cys-231, which acts as the Nucleophile; cysteine thiosulfonate intermediate.

This sequence belongs to the PAPS reductase family. CysH subfamily. It depends on [4Fe-4S] cluster as a cofactor.

It is found in the cytoplasm. It catalyses the reaction [thioredoxin]-disulfide + sulfite + AMP + 2 H(+) = adenosine 5'-phosphosulfate + [thioredoxin]-dithiol. Its pathway is sulfur metabolism; hydrogen sulfide biosynthesis; sulfite from sulfate. In terms of biological role, catalyzes the formation of sulfite from adenosine 5'-phosphosulfate (APS) using thioredoxin as an electron donor. This Chelativorans sp. (strain BNC1) protein is Adenosine 5'-phosphosulfate reductase.